Consider the following 1940-residue polypeptide: Myosin-3 (1940 aa).

A Myosin N-terminal SH3-like domain is found at 33–82; the sequence is DAKTYCFVVDSKEEYAKGKIKSSQDGKVTVETEDNRTLVVKPEDVYAMNP. In terms of domain architecture, Myosin motor spans 86-779; the sequence is DKIEDMAMLT…LLGTLEEMRD (694 aa). Lysine 130 bears the N6,N6,N6-trimethyllysine mark. ATP is bound at residue 179–186; that stretch reads GESGAGKT. Actin-binding stretches follow at residues 656-678 and 758-772; these read LNKLMSNLRTTHPHFVRCIIPNE and KFGHTKVFFKAGLLG. The region spanning 782–811 is the IQ domain; that stretch reads LAKLITRTQAVCRGFLMRVEFQKMMQRRES. Positions 840–1933 form a coiled coil; it reads LLKSAETEKE…KTRDFTSSRM (1094 aa). The tract at residues 1260–1289 is disordered; that stretch reads ARGKNEETQRSLSELTTQKSRLQTEAGELS. Residues 1269–1282 are compositionally biased toward polar residues; sequence RSLSELTTQKSRLQ.

This sequence belongs to the TRAFAC class myosin-kinesin ATPase superfamily. Myosin family. As to quaternary structure, muscle myosin is a hexameric protein that consists of 2 heavy chain subunits (MHC), 2 alkali light chain subunits (MLC) and 2 regulatory light chain subunits (MLC-2).

It is found in the cytoplasm. It localises to the myofibril. Muscle contraction. The polypeptide is Myosin-3 (Myh3) (Rattus norvegicus (Rat)).